Here is a 750-residue protein sequence, read N- to C-terminus: MAPSFDHLRDEDLDEEDFDMDEVDISDLREKYEVQLEQGYDTFVVVDGLPEVNADQKPKLVKFLLKKLNSVGRVSEDSVYMPMGDNGLSLRFAFVEYSSPAEAAAAVRQLDFTPLDKKHTLRVNKMTDVDRYGREGRIEEEYTAPKIEEFQEKEHLRSFMADPSERGRDQFVMFRGETVGVFWNNEKDQPENIVDRQQWTETFVQWSPQGTYLTSVHAQGVLLWGGASWARLRRFPHPFVNLVAFSPNEKYMVTWSNRPISIPDSGHPALSLDDDGKNYVIWDLETSKPLRSFAQQDTPATGDDAAKKSAKFPWPAFKWSADDKYVARLNQGTSISVYELPKMNLMDKTAIKIEGVMDFEWAPATPRRDGVKTYEQLFCFWTPEIGSNPARVGLMSIPSKQIVRSLNLFSVSDVKLHWQSDSAYICVKVDRHSKSKKSQATTLEIFRVKEKGVPVEVVDTIKDTVINFAWEPKGDRFVIITTPEPVGAVAVAPKTSVAFFCPEKAKGNAIGNFKHLRTLDKKNSNAIYWSPKGRFVVVAAIANTQSSDLDFFDVDFEGEKPEGEKDLTANLQLMNTSEHYGMTDIEWDPSGRYVATWASSWKHVMENGYHLYDFRGELLREEAIEKFKQWSWRPRPATLLTKEEQKQIRKNLREYSRVFEQEDADRISSADVAVVEARRRLLLEWVTWRESMEEELVEDRAALGLPEDPVAELLRQKTAAITPAAGEEQEEQVVEEIMEEVLEESEEIVN.

Residues T42–D128 enclose the RRM domain. WD repeat units lie at residues D195–R234, P236–S292, S309–K348, and L519–E562.

This sequence belongs to the eIF-3 subunit B family. In terms of assembly, component of the eukaryotic translation initiation factor 3 (eIF-3) complex.

It is found in the cytoplasm. RNA-binding component of the eukaryotic translation initiation factor 3 (eIF-3) complex, which is involved in protein synthesis of a specialized repertoire of mRNAs and, together with other initiation factors, stimulates binding of mRNA and methionyl-tRNAi to the 40S ribosome. The eIF-3 complex specifically targets and initiates translation of a subset of mRNAs involved in cell proliferation. The chain is Eukaryotic translation initiation factor 3 subunit B from Chaetomium globosum (strain ATCC 6205 / CBS 148.51 / DSM 1962 / NBRC 6347 / NRRL 1970) (Soil fungus).